The primary structure comprises 947 residues: Beta-glucosidase (947 aa).

Asp696 is an active-site residue.

The protein belongs to the glycosyl hydrolase 3 family.

It carries out the reaction Hydrolysis of terminal, non-reducing beta-D-glucosyl residues with release of beta-D-glucose.. It participates in glycan metabolism; cellulose degradation. In Ruminococcus albus, this protein is Beta-glucosidase.